Consider the following 440-residue polypeptide: Adenosylhomocysteinase (440 aa).

Residues T64, D139, and E164 each contribute to the substrate site. 165–167 (TTT) provides a ligand contact to NAD(+). 2 residues coordinate substrate: K194 and D198. Residues N199, 228–233 (GFGDVG), E251, N286, 307–309 (IGH), and N352 contribute to the NAD(+) site.

This sequence belongs to the adenosylhomocysteinase family. The cofactor is NAD(+).

The protein resides in the cytoplasm. The enzyme catalyses S-adenosyl-L-homocysteine + H2O = L-homocysteine + adenosine. Its pathway is amino-acid biosynthesis; L-homocysteine biosynthesis; L-homocysteine from S-adenosyl-L-homocysteine: step 1/1. Functionally, may play a key role in the regulation of the intracellular concentration of adenosylhomocysteine. This is Adenosylhomocysteinase from Granulibacter bethesdensis (strain ATCC BAA-1260 / CGDNIH1).